The sequence spans 1268 residues: Vigilin (1268 aa).

Ser2 carries the post-translational modification N-acetylserine. At Thr8 the chain carries Phosphothreonine. 3 positions are modified to phosphoserine: Ser11, Ser31, and Ser35. 14 KH domains span residues 158 to 229 (PKEH…RLEV), 230 to 302 (EKAF…AVEV), 303 to 371 (KKSQ…SVAA), 372 to 442 (PSWL…EINI), 443 to 514 (DHKF…DLII), 515 to 588 (EQRF…SVPI), 589 to 660 (FKQF…EVSI), 661 to 734 (PAKL…DIRA), 735 to 807 (KPEY…SMLV), 808 to 880 (DPKH…ECAI), 881 to 979 (PQKF…EVEV), 980 to 1059 (PFDL…SVTV), 1060 to 1134 (DPKY…DVPL), and 1135 to 1209 (DHRV…ALQV). Thr295 and Thr296 each carry phosphothreonine. Position 317 is a phosphoserine (Ser317). Tyr437 is subject to Phosphotyrosine. The residue at position 645 (Ser645) is a Phosphoserine. A disordered region spans residues 914–944 (ENAVHSTEPVVQENGDEAGEGREAKDCDPGS). The span at 932-944 (GEGREAKDCDPGS) shows a compositional bias: basic and acidic residues. Lys991 bears the N6-acetyllysine mark. The segment at 1233–1268 (WTASSSEKAPDMSSSEEFPSFGAQVAPKTLPWGPKR) is disordered. Over residues 1234–1249 (TASSSEKAPDMSSSEE) the composition is skewed to polar residues. 2 positions are modified to phosphoserine: Ser1247 and Ser1252.

It localises to the cytoplasm. Its subcellular location is the nucleus. Appears to play a role in cell sterol metabolism. It may function to protect cells from over-accumulation of cholesterol. The protein is Vigilin (HDLBP) of Homo sapiens (Human).